We begin with the raw amino-acid sequence, 418 residues long: CinA-like protein (418 aa).

This sequence belongs to the CinA family.

The protein is CinA-like protein of Leptospira borgpetersenii serovar Hardjo-bovis (strain L550).